Reading from the N-terminus, the 208-residue chain is Glutathione S-transferase P (208 aa).

A GST N-terminal domain is found at 1 to 78 (MTLKLTYFDI…HLARLNGLNG (78 aa)). Glutathione is bound by residues tyrosine 7, tryptophan 38, lysine 42, 49–50 (QV), and 62–63 (QS). The GST C-terminal domain maps to 80–202 (NETETTFIDM…NKRAAINPPV (123 aa)).

Belongs to the GST superfamily. Pi family. In terms of assembly, homodimer. In terms of tissue distribution, expressed in dopaminergic (DA) neuron (at protein levels).

The enzyme catalyses RX + glutathione = an S-substituted glutathione + a halide anion + H(+). In terms of biological role, conjugation of reduced glutathione to a wide number of exogenous and endogenous hydrophobic electrophiles. Prevents dopaminergic CEP neuron degeneration in response to Mn(2+). In Caenorhabditis elegans, this protein is Glutathione S-transferase P (gst-1).